A 534-amino-acid polypeptide reads, in one-letter code: GTPase Obg (534 aa).

Residues 2–159 (ASFVDRVVLH…SDIVLELKSI (158 aa)) form the Obg domain. The segment at 63-82 (APHRHASNGGQGMGDWRGGK) is disordered. Gly residues predominate over residues 71–82 (GGQGMGDWRGGK). The region spanning 160 to 343 (ADIALVGFPS…LSFAMAELVT (184 aa)) is the OBG-type G domain. Residues 166 to 173 (GFPSAGKS), 191 to 195 (FTTLI), 212 to 215 (DVPG), 295 to 298 (NKID), and 324 to 326 (SAS) contribute to the GTP site. The Mg(2+) site is built by S173 and T193. In terms of domain architecture, OCT spans 363–449 (PRAVNRKEFT…ENAVVFDWEP (87 aa)). The tract at residues 456-534 (ELLSGPRGTD…AASTDDGDAL (79 aa)) is disordered. 2 stretches are compositionally biased toward basic and acidic residues: residues 464–504 (TDPR…ERKA) and 512–526 (SARR…REAA).

Belongs to the TRAFAC class OBG-HflX-like GTPase superfamily. OBG GTPase family. Monomer. Mg(2+) serves as cofactor.

It is found in the cytoplasm. An essential GTPase which binds GTP, GDP and possibly (p)ppGpp with moderate affinity, with high nucleotide exchange rates and a fairly low GTP hydrolysis rate. Plays a role in control of the cell cycle, stress response, ribosome biogenesis and in those bacteria that undergo differentiation, in morphogenesis control. In Renibacterium salmoninarum (strain ATCC 33209 / DSM 20767 / JCM 11484 / NBRC 15589 / NCIMB 2235), this protein is GTPase Obg.